The primary structure comprises 266 residues: Hydroxyethylthiazole kinase (266 aa).

M43 provides a ligand contact to substrate. Residues R119 and T166 each contribute to the ATP site. Substrate is bound at residue G193.

It belongs to the Thz kinase family. It depends on Mg(2+) as a cofactor.

The catalysed reaction is 5-(2-hydroxyethyl)-4-methylthiazole + ATP = 4-methyl-5-(2-phosphooxyethyl)-thiazole + ADP + H(+). It functions in the pathway cofactor biosynthesis; thiamine diphosphate biosynthesis; 4-methyl-5-(2-phosphoethyl)-thiazole from 5-(2-hydroxyethyl)-4-methylthiazole: step 1/1. Functionally, catalyzes the phosphorylation of the hydroxyl group of 4-methyl-5-beta-hydroxyethylthiazole (THZ). This is Hydroxyethylthiazole kinase from Methanococcus maripaludis (strain C7 / ATCC BAA-1331).